We begin with the raw amino-acid sequence, 257 residues long: 3-methyl-2-oxobutanoate hydroxymethyltransferase (257 aa).

2 residues coordinate Mg(2+): Asp42 and Asp86. 3-methyl-2-oxobutanoate contacts are provided by residues 42–43 (DS), Asp86, and Lys116. Position 118 (Glu118) interacts with Mg(2+). The active-site Proton acceptor is Glu185.

This sequence belongs to the PanB family. In terms of assembly, homodecamer; pentamer of dimers. Mg(2+) serves as cofactor.

Its subcellular location is the cytoplasm. The catalysed reaction is 3-methyl-2-oxobutanoate + (6R)-5,10-methylene-5,6,7,8-tetrahydrofolate + H2O = 2-dehydropantoate + (6S)-5,6,7,8-tetrahydrofolate. Its pathway is cofactor biosynthesis; (R)-pantothenate biosynthesis; (R)-pantoate from 3-methyl-2-oxobutanoate: step 1/2. Its function is as follows. Catalyzes the reversible reaction in which hydroxymethyl group from 5,10-methylenetetrahydrofolate is transferred onto alpha-ketoisovalerate to form ketopantoate. This is 3-methyl-2-oxobutanoate hydroxymethyltransferase from Prochlorococcus marinus (strain MIT 9215).